The chain runs to 296 residues: Nucleotide-binding protein spyM18_0713 (296 aa).

13-20 (GMSGAGKT) contacts ATP. Position 63-66 (63-66 (DMRS)) interacts with GTP.

Belongs to the RapZ-like family.

In terms of biological role, displays ATPase and GTPase activities. This chain is Nucleotide-binding protein spyM18_0713, found in Streptococcus pyogenes serotype M18 (strain MGAS8232).